A 294-amino-acid chain; its full sequence is Acetylglutamate kinase (294 aa).

Residues 69 to 70, arginine 91, and asparagine 190 each bind substrate; that span reads GG.

The protein belongs to the acetylglutamate kinase family. ArgB subfamily.

It is found in the cytoplasm. The catalysed reaction is N-acetyl-L-glutamate + ATP = N-acetyl-L-glutamyl 5-phosphate + ADP. Its pathway is amino-acid biosynthesis; L-arginine biosynthesis; N(2)-acetyl-L-ornithine from L-glutamate: step 2/4. Catalyzes the ATP-dependent phosphorylation of N-acetyl-L-glutamate. The protein is Acetylglutamate kinase of Mycobacterium bovis (strain ATCC BAA-935 / AF2122/97).